Reading from the N-terminus, the 972-residue chain is MTDTTKIDYSKTLYLPQTEFPIRAGLPQREPLFVQRWEEMNLYKKLREQAKDRPLYVLHDGPPYANGNIHIGHALNKILKDVITRSFQMRGYNSNYVPGWDCHGLPIEWKIEEKYRAAGKNKDEVPINEFRKECRELASNWIKVQTEEFKRLAILGDFENPYTTMNFHAEARIAGELLKFAASGQLYRGSKPVMWSVVERTALAEAEVEYHDIESDMIWVKFPVAGEVATENDLSGSAVVIWTTTPWTIPGNRAVSYSSRIEYGLFEITEAENDFGPRPGERLVFADKLVEECCAKAKLQFKRLRSVSAEELGKIVLDHPLKGFGGGYEFVVPMLDGDHVTDDAGTGFVHTAPSHGREDFEAWMDNARQLEARGIDPNIPFPVGDDGFYTKDAPGFGPDREGGPARVIDDNGKKGDANKVVIEQLIAADKLFARGRLKHSYPHSWRSKKPVIFRNTPQWFVYMDKNLGDGTTLRSRALKAIDETRFVPAAGQTRLRSMIEGRPDWVLSRQRAWGVPICVFVDEEGNILQDDAVNKRIMDAFEKEGADAWFADGARERFLGARAGEGWTQVRDILDVWFDSGSTHTFTLEDRPDLKWPADVYLEGSDQHRGWFHSSLLESCGTRGRAPYNAVVTHGFTMDEHGKKMSKSLGNTVTPQDVIKESGADILRLWVMTTDYWEDQRLGKSIIQTNIDAYRKLRNTIRWMLGTLAHDEGENVAYADLPELERLMLHRLTELDELVRSGYDTFDFKRIARALVDFMNVELSAFYFDIRKDALYCDAPSSIRRKAALQTVREIFVRLTTWLAPMLPFTMEEAWLDRYPQSVSIHAEQFRPTPAEWRDDVLAEKWRKVRAVRRVVTGALELERADKRIGSSLEAAPVVYIADKSLSDSLEGLDFAEICITSGISVSDAAAPEGAFTLGDVKGVAVVPERAKGEKCARSWRYTTDVGADPEFPEVSARDAAALRELQALGKL.

Residues 63 to 73 (PYANGNIHIGH) carry the 'HIGH' region motif. Position 603 (Glu603) interacts with L-isoleucyl-5'-AMP. The 'KMSKS' region motif lies at 644-648 (KMSKS). Lys647 lines the ATP pocket.

This sequence belongs to the class-I aminoacyl-tRNA synthetase family. IleS type 1 subfamily. In terms of assembly, monomer.

Its subcellular location is the cytoplasm. The catalysed reaction is tRNA(Ile) + L-isoleucine + ATP = L-isoleucyl-tRNA(Ile) + AMP + diphosphate. Functionally, catalyzes the attachment of isoleucine to tRNA(Ile). As IleRS can inadvertently accommodate and process structurally similar amino acids such as valine, to avoid such errors it has two additional distinct tRNA(Ile)-dependent editing activities. One activity is designated as 'pretransfer' editing and involves the hydrolysis of activated Val-AMP. The other activity is designated 'posttransfer' editing and involves deacylation of mischarged Val-tRNA(Ile). The polypeptide is Isoleucine--tRNA ligase (Brucella suis biovar 1 (strain 1330)).